Here is a 101-residue protein sequence, read N- to C-terminus: Large ribosomal subunit protein eL43 (101 aa).

The segment at cysteine 40–cysteine 62 adopts a C4-type zinc-finger fold.

Belongs to the eukaryotic ribosomal protein eL43 family. The cofactor is Zn(2+).

In Pyrobaculum neutrophilum (strain DSM 2338 / JCM 9278 / NBRC 100436 / V24Sta) (Thermoproteus neutrophilus), this protein is Large ribosomal subunit protein eL43.